The sequence spans 396 residues: Phosphoglycerate kinase (396 aa).

Substrate is bound by residues 21 to 23, R36, 59 to 62, R118, and R151; these read DLN and HFGR. Residues K201, E323, and 353–356 contribute to the ATP site; that span reads GGDT.

The protein belongs to the phosphoglycerate kinase family. Monomer.

The protein localises to the cytoplasm. It catalyses the reaction (2R)-3-phosphoglycerate + ATP = (2R)-3-phospho-glyceroyl phosphate + ADP. It functions in the pathway carbohydrate degradation; glycolysis; pyruvate from D-glyceraldehyde 3-phosphate: step 2/5. The polypeptide is Phosphoglycerate kinase (Rhodospirillum centenum (strain ATCC 51521 / SW)).